Reading from the N-terminus, the 625-residue chain is Phosphomethylpyrimidine synthase (625 aa).

Substrate-binding positions include asparagine 231, methionine 260, tyrosine 289, histidine 325, 345–347, 386–389, and glutamate 425; these read SRG and DGLR. Histidine 429 is a Zn(2+) binding site. A substrate-binding site is contributed by tyrosine 452. Histidine 493 contributes to the Zn(2+) binding site. Residues cysteine 573, cysteine 576, and cysteine 581 each contribute to the [4Fe-4S] cluster site.

It belongs to the ThiC family. As to quaternary structure, homodimer. The cofactor is [4Fe-4S] cluster.

It catalyses the reaction 5-amino-1-(5-phospho-beta-D-ribosyl)imidazole + S-adenosyl-L-methionine = 4-amino-2-methyl-5-(phosphooxymethyl)pyrimidine + CO + 5'-deoxyadenosine + formate + L-methionine + 3 H(+). The protein operates within cofactor biosynthesis; thiamine diphosphate biosynthesis. Its function is as follows. Catalyzes the synthesis of the hydroxymethylpyrimidine phosphate (HMP-P) moiety of thiamine from aminoimidazole ribotide (AIR) in a radical S-adenosyl-L-methionine (SAM)-dependent reaction. The protein is Phosphomethylpyrimidine synthase of Acinetobacter baumannii (strain SDF).